Consider the following 79-residue polypeptide: MALNDKLDATKDKVSGKVKETTGKVTGDEKLEAKGKTEGLMGKAKEGLENIKDKASDLAEDVAEKFNDTVDSVKHKNEK.

The disordered stretch occupies residues 1 to 30 (MALNDKLDATKDKVSGKVKETTGKVTGDEK).

This sequence belongs to the UPF0337 (CsbD) family.

This is UPF0337 protein YhjA (yhjA) from Lactococcus lactis subsp. lactis (strain IL1403) (Streptococcus lactis).